The following is a 288-amino-acid chain: uncharacterized protein (288 aa).

2 disordered regions span residues 31 to 52 and 179 to 288; these read KAVDAPPASQIPGLSDPREAPS and YPSK…VELK. Positions 206–217 are enriched in polar residues; the sequence is RPSSPTNFSKLI. Residues 221-236 are compositionally biased toward basic and acidic residues; it reads YKDEWLQQQADSDKRA. Composition is skewed to low complexity over residues 237–249 and 267–276; these read PQTPQSSVSSPSP and AAESSPLSSA.

This is an uncharacterized protein from Bos taurus (Bovine).